The following is a 187-amino-acid chain: UPF0301 protein SO_3346 (187 aa).

This sequence belongs to the UPF0301 (AlgH) family.

This is UPF0301 protein SO_3346 from Shewanella oneidensis (strain ATCC 700550 / JCM 31522 / CIP 106686 / LMG 19005 / NCIMB 14063 / MR-1).